The sequence spans 364 residues: Alanine racemase (364 aa).

K35 serves as the catalytic Proton acceptor; specific for D-alanine. K35 is modified (N6-(pyridoxal phosphate)lysine). R136 contributes to the substrate binding site. Catalysis depends on Y261, which acts as the Proton acceptor; specific for L-alanine. M309 is a binding site for substrate.

The protein belongs to the alanine racemase family. Pyridoxal 5'-phosphate is required as a cofactor.

It catalyses the reaction L-alanine = D-alanine. It participates in amino-acid biosynthesis; D-alanine biosynthesis; D-alanine from L-alanine: step 1/1. In terms of biological role, catalyzes the interconversion of L-alanine and D-alanine. May also act on other amino acids. The chain is Alanine racemase (alr) from Shewanella amazonensis (strain ATCC BAA-1098 / SB2B).